Reading from the N-terminus, the 152-residue chain is SsrA-binding protein (152 aa).

This sequence belongs to the SmpB family.

It localises to the cytoplasm. Its function is as follows. Required for rescue of stalled ribosomes mediated by trans-translation. Binds to transfer-messenger RNA (tmRNA), required for stable association of tmRNA with ribosomes. tmRNA and SmpB together mimic tRNA shape, replacing the anticodon stem-loop with SmpB. tmRNA is encoded by the ssrA gene; the 2 termini fold to resemble tRNA(Ala) and it encodes a 'tag peptide', a short internal open reading frame. During trans-translation Ala-aminoacylated tmRNA acts like a tRNA, entering the A-site of stalled ribosomes, displacing the stalled mRNA. The ribosome then switches to translate the ORF on the tmRNA; the nascent peptide is terminated with the 'tag peptide' encoded by the tmRNA and targeted for degradation. The ribosome is freed to recommence translation, which seems to be the essential function of trans-translation. This Helicobacter acinonychis (strain Sheeba) protein is SsrA-binding protein.